Here is a 285-residue protein sequence, read N- to C-terminus: Acetylglutamate kinase (285 aa).

Residues 63-64 (GG), R85, and N178 contribute to the substrate site.

It belongs to the acetylglutamate kinase family. ArgB subfamily.

Its subcellular location is the cytoplasm. It catalyses the reaction N-acetyl-L-glutamate + ATP = N-acetyl-L-glutamyl 5-phosphate + ADP. It functions in the pathway amino-acid biosynthesis; L-arginine biosynthesis; N(2)-acetyl-L-ornithine from L-glutamate: step 2/4. Catalyzes the ATP-dependent phosphorylation of N-acetyl-L-glutamate. This is Acetylglutamate kinase from Synechococcus sp. (strain CC9311).